Reading from the N-terminus, the 1657-residue chain is Alsin (1657 aa).

RCC1 repeat units follow at residues 60 to 109 (GEVY…VTDN), 110 to 168 (GVAY…LSIS), and 169 to 219 (REIW…LVQC). The tract at residues 432 to 481 (TGAQAGSSAIGPEGLKDSREEQVKQESMQGKKSSSLVDIREEETEGGSRR) is disordered. Positions 445–455 (GLKDSREEQVK) are enriched in basic and acidic residues. The segment covering 456–467 (QESMQGKKSSSL) has biased composition (polar residues). Phosphoserine occurs at positions 465, 466, 483, and 492. Thr510 is modified (phosphothreonine). RCC1 repeat units lie at residues 526 to 577 (TEVW…LTAK) and 578 to 628 (SQVY…LVDT). Residue Lys533 is modified to N6-acetyllysine. A DH domain is found at 690–885 (GYIASLHELA…ECLALHLGRK (196 aa)). Positions 901-1007 (GKMTDSLRKP…RAISQAVDQA (107 aa)) constitute a PH domain. MORN repeat units lie at residues 1049-1071 (YDGR…DGKM), 1072-1094 (YSGM…NKAM), 1100-1122 (YVGH…SGEV), 1123-1145 (FEGC…KLTS), 1151-1173 (FIGQ…TRGE), 1175-1197 (YMGM…FGLY), 1198-1220 (YEGN…DDTI), and 1221-1244 (YEGE…NGDY). Ser1335 carries the post-translational modification Phosphoserine. A VPS9 domain is found at 1513 to 1657 (KQPDIALLGF…YYQIQREKLN (145 aa)).

Forms a heteromeric complex with ALS2CL. Interacts with ALS2CL.

Functionally, may act as a GTPase regulator. Controls survival and growth of spinal motoneurons. The chain is Alsin (ALS2) from Pan troglodytes (Chimpanzee).